Consider the following 214-residue polypeptide: Adenylate kinase (214 aa).

10–15 contributes to the ATP binding site; it reads GAGKGT. The segment at 30–59 is NMP; the sequence is STGDMLRAAVKAGTPLGLEAKKVMDAGQLV. Residues Thr-31, Arg-36, 57 to 59, 85 to 88, and Gln-92 each bind AMP; these read QLV and GFPR. Residues 122–159 are LID; it reads GRRVHPGSGRVYHVVFNPPKVEGKDDVTGEDLAIRPDD. ATP is bound by residues Arg-123 and 132–133; that span reads VY. The AMP site is built by Arg-156 and Arg-167. Gln-200 contacts ATP.

The protein belongs to the adenylate kinase family. As to quaternary structure, monomer.

The protein localises to the cytoplasm. It catalyses the reaction AMP + ATP = 2 ADP. The protein operates within purine metabolism; AMP biosynthesis via salvage pathway; AMP from ADP: step 1/1. In terms of biological role, catalyzes the reversible transfer of the terminal phosphate group between ATP and AMP. Plays an important role in cellular energy homeostasis and in adenine nucleotide metabolism. In Shewanella oneidensis (strain ATCC 700550 / JCM 31522 / CIP 106686 / LMG 19005 / NCIMB 14063 / MR-1), this protein is Adenylate kinase.